Here is a 69-residue protein sequence, read N- to C-terminus: uncharacterized protein (69 aa).

Disordered stretches follow at residues 1-32 (MSAP…GWGD) and 44-69 (QSDA…APSD). Basic and acidic residues-rich tracts occupy residues 7 to 32 (NLDR…GWGD) and 46 to 69 (DADK…APSD).

This is an uncharacterized protein from Schizosaccharomyces pombe (strain 972 / ATCC 24843) (Fission yeast).